The following is a 178-amino-acid chain: Large ribosomal subunit protein uL6 (178 aa).

Residues P155–R169 show a composition bias toward basic and acidic residues. Residues P155–K178 are disordered.

Belongs to the universal ribosomal protein uL6 family. In terms of assembly, part of the 50S ribosomal subunit.

Functionally, this protein binds to the 23S rRNA, and is important in its secondary structure. It is located near the subunit interface in the base of the L7/L12 stalk, and near the tRNA binding site of the peptidyltransferase center. The polypeptide is Large ribosomal subunit protein uL6 (Nitratidesulfovibrio vulgaris (strain DSM 19637 / Miyazaki F) (Desulfovibrio vulgaris)).